The sequence spans 629 residues: MTDSFYGYDVIVIGAGHAGSEAALAAARTGAHTLLLTHNIETIGAMSCNPAIGGIGKGHLVKEIDALGGAMAHAADAAGIQWRTLNASKGPAVRATRCQADRALYRAAIRQMIEGQARLNIFQAEVDDLLFEGDTVCGAITHTGLHFKAPAVVLTAGTFLAGKIHIGPTQYAAGRMGDPPATMLAARLRERLFTVARLKTGTPPRIDGRTLNYTAMQEQPGDAPRPTMSFIGNSASHPPQVSCWITQTTERTHEIIRAALHRSPLYSGQIEGAGPRYCPSIEDKVVRFAEKNSHQIFVEPEGLNVIDIYPNGISTSLPFDVQLELVRSIRGFEQAHITRPGYAIEYDFFDPRGLKASLETKAIAGLFFAGQINGTTGYEEAAAQGLLAGLNAARHVRGLSSWTPRRDQAYLGVLVDDLITHGTNEPYRMFTSRAEYRLQLREDNADARLTAIGRDLGLIDDARWAHFNAKQEAVARECERLSAFWATPGNALGREVKETLGVTLSRETNIIDLMKRPELDYAALMRVPSLGPGVDDAQVAEQVEISVKYAGYLNRQSEEITRQQRHEATAIPLEFDYAAVRGLSTEVLQKLQHIQPQTVGQAQRIPGMTPAAISLLLVHLERMRRNRVA.

An FAD-binding site is contributed by 14-19 (GAGHAG). 274–288 (GPRYCPSIEDKVVRF) contributes to the NAD(+) binding site.

It belongs to the MnmG family. As to quaternary structure, homodimer. Heterotetramer of two MnmE and two MnmG subunits. Requires FAD as cofactor.

It localises to the cytoplasm. Its function is as follows. NAD-binding protein involved in the addition of a carboxymethylaminomethyl (cmnm) group at the wobble position (U34) of certain tRNAs, forming tRNA-cmnm(5)s(2)U34. This is tRNA uridine 5-carboxymethylaminomethyl modification enzyme MnmG from Xylella fastidiosa (strain 9a5c).